Consider the following 218-residue polypeptide: Small ribosomal subunit protein uS3 (218 aa).

One can recognise a KH type-2 domain in the interval 43 to 113 (IREHIERKLA…KVQVNVREVS (71 aa)).

Belongs to the universal ribosomal protein uS3 family. Part of the 30S ribosomal subunit. Forms a tight complex with proteins S10 and S14.

In terms of biological role, binds the lower part of the 30S subunit head. Binds mRNA in the 70S ribosome, positioning it for translation. The polypeptide is Small ribosomal subunit protein uS3 (Rubrobacter xylanophilus (strain DSM 9941 / JCM 11954 / NBRC 16129 / PRD-1)).